The primary structure comprises 708 residues: Leukotoxin translocation ATP-binding protein LktB (708 aa).

Positions 1–126 (MEANHQRNDL…ACYQGQLILV (126 aa)) constitute a Peptidase C39 domain. The ABC transmembrane type-1 domain maps to 155–437 (FLETLIVSIF…LAQLWQDFQQ (283 aa)). Transmembrane regions (helical) follow at residues 159 to 179 (LIVS…FQVV), 192 to 212 (LNII…LSGL), 270 to 290 (ALTS…MWYY), 296 to 316 (LVIL…SPIL), and 389 to 409 (VMVI…LSIG). In terms of domain architecture, ABC transporter spans 469–704 (ISFKNIRFRY…SNGLYSYLHQ (236 aa)). Residue 503–510 (GRSGSGKS) participates in ATP binding.

The protein belongs to the ABC transporter superfamily. Protein-1 exporter (TC 3.A.1.109) family. In terms of assembly, homodimer.

The protein localises to the cell inner membrane. The enzyme catalyses ATP + H2O + proteinSide 1 = ADP + phosphate + proteinSide 2.. Its function is as follows. Part of the ABC transporter complex LktBD involved in leukotoxin export. Transmembrane domains (TMD) form a pore in the inner membrane and the ATP-binding domain (NBD) is responsible for energy generation. In Mannheimia haemolytica (Pasteurella haemolytica), this protein is Leukotoxin translocation ATP-binding protein LktB (lktB).